A 190-amino-acid polypeptide reads, in one-letter code: MRIAILGGTYNPVHVGHMFLAKEIEHFLNVDKILFIPTHKPVHKCVENISVKDRIAMLKLAVQHENNMFIDECDIINGGITYTVDTIACIRNKYVHDDIYLVIGDDLFESFDSWKNPEKIIDSVNLVVVHRIYSERLVSRFKHTYIDNRIFSISSSEIRSRIEQGLPVDYLLPFDVLQYIKSNNLYVKGK.

Belongs to the NadD family.

It catalyses the reaction nicotinate beta-D-ribonucleotide + ATP + H(+) = deamido-NAD(+) + diphosphate. It functions in the pathway cofactor biosynthesis; NAD(+) biosynthesis; deamido-NAD(+) from nicotinate D-ribonucleotide: step 1/1. In terms of biological role, catalyzes the reversible adenylation of nicotinate mononucleotide (NaMN) to nicotinic acid adenine dinucleotide (NaAD). The protein is Probable nicotinate-nucleotide adenylyltransferase of Borrelia turicatae (strain 91E135).